Consider the following 924-residue polypeptide: Exocyst complex component 2 (924 aa).

Residues 8-93 (PLVTGISPNE…GTSTVSFKLL (86 aa)) form the IPT/TIG domain. A coiled-coil region spans residues 240–260 (QKLENVLNRASNTADTLFQEV). Ser431, Ser432, and Ser435 each carry phosphoserine. Thr440 carries the phosphothreonine modification. Lys454 is subject to N6-acetyllysine.

The protein belongs to the SEC5 family. The exocyst complex is composed of EXOC1, EXOC2, EXOC3, EXOC4, EXOC5, EXOC6, EXOC7 and EXOC8. Interacts with EXOC3L1. Interacts with GNEFR/DELGEF; this interaction occurs only in the presence of magnesium or manganese and is stimulated by dCTP or GTP. Interacts with RALA and RALB. Interacts with ARL13B; regulates ARL13B localization to the cilium membrane.

The protein resides in the midbody. It localises to the midbody ring. In terms of biological role, component of the exocyst complex involved in the docking of exocytic vesicles with fusion sites on the plasma membrane. The protein is Exocyst complex component 2 (Exoc2) of Mus musculus (Mouse).